The sequence spans 1179 residues: Pesticidal crystal protein Cry1Ad (1179 aa).

It belongs to the delta endotoxin family.

In terms of biological role, promotes colloidosmotic lysis by binding to the midgut epithelial cells of many lepidopteran larvae. The sequence is that of Pesticidal crystal protein Cry1Ad (cry1Ad) from Bacillus thuringiensis subsp. aizawai.